Consider the following 113-residue polypeptide: Hydrogenase maturation factor HypA (113 aa).

Residue His-2 participates in Ni(2+) binding. Zn(2+) is bound by residues Cys-73, Cys-76, Cys-89, and Cys-92.

The protein belongs to the HypA/HybF family.

Its function is as follows. Involved in the maturation of [NiFe] hydrogenases. Required for nickel insertion into the metal center of the hydrogenase. The protein is Hydrogenase maturation factor HypA of Rhodopseudomonas palustris (strain BisB5).